A 430-amino-acid polypeptide reads, in one-letter code: Adenylosuccinate synthetase (430 aa).

Residues 13–19 (GDEGKGK) and 41–43 (GHT) each bind GTP. Residue aspartate 14 is the Proton acceptor of the active site. Residues aspartate 14 and glycine 41 each contribute to the Mg(2+) site. Residues 14–17 (DEGK), 39–42 (NAGH), threonine 130, arginine 144, glutamine 225, threonine 240, and arginine 304 each bind IMP. Histidine 42 acts as the Proton donor in catalysis. Residue 300 to 306 (STTGRKR) participates in substrate binding. Residues arginine 306, 332 to 334 (KLD), and 414 to 416 (STG) each bind GTP.

The protein belongs to the adenylosuccinate synthetase family. In terms of assembly, homodimer. Requires Mg(2+) as cofactor.

It is found in the cytoplasm. The enzyme catalyses IMP + L-aspartate + GTP = N(6)-(1,2-dicarboxyethyl)-AMP + GDP + phosphate + 2 H(+). It functions in the pathway purine metabolism; AMP biosynthesis via de novo pathway; AMP from IMP: step 1/2. In terms of biological role, plays an important role in the de novo pathway of purine nucleotide biosynthesis. Catalyzes the first committed step in the biosynthesis of AMP from IMP. The protein is Adenylosuccinate synthetase of Buchnera aphidicola subsp. Schizaphis graminum (strain Sg).